Reading from the N-terminus, the 126-residue chain is Fluoride-specific ion channel FluC (126 aa).

4 helical membrane-spanning segments follow: residues 4 to 24 (SLLSIACGAVLGAWLRWFVGL), 35 to 55 (LGTILVNLVGGFIIGFAIALF), 67 to 87 (FVITGFCGALTTFSTFSAEVI), and 97 to 117 (FAIALITIHLMGSLLCTVLGL). The Na(+) site is built by glycine 74 and threonine 77.

The protein belongs to the fluoride channel Fluc/FEX (TC 1.A.43) family.

The protein resides in the cell inner membrane. The enzyme catalyses fluoride(in) = fluoride(out). Its activity is regulated as follows. Na(+) is not transported, but it plays an essential structural role and its presence is essential for fluoride channel function. Fluoride-specific ion channel. Important for reducing fluoride concentration in the cell, thus reducing its toxicity. The sequence is that of Fluoride-specific ion channel FluC from Acinetobacter baylyi (strain ATCC 33305 / BD413 / ADP1).